A 536-amino-acid polypeptide reads, in one-letter code: Putative UDP-glucuronosyltransferase ugt-47 (536 aa).

The first 21 residues, Met1 to Ala21, serve as a signal peptide directing secretion. Residues Asn52 and Asn308 are each glycosylated (N-linked (GlcNAc...) asparagine). Residues Ile497 to Phe517 form a helical membrane-spanning segment.

This sequence belongs to the UDP-glycosyltransferase family.

Its subcellular location is the membrane. It catalyses the reaction glucuronate acceptor + UDP-alpha-D-glucuronate = acceptor beta-D-glucuronoside + UDP + H(+). This chain is Putative UDP-glucuronosyltransferase ugt-47 (ugt-47), found in Caenorhabditis elegans.